Reading from the N-terminus, the 524-residue chain is N-acetylgalactosamine-6-sulfatase (524 aa).

Residues 1–27 form the signal peptide; the sequence is MTACSTAIRAQQLLLPVLSALGLLAAG. The tract at residues 28 to 381 is catalytic domain; that stretch reads APQPPNIVLL…PTMLQGHIID (354 aa). 3 residues coordinate Ca(2+): Asp40, Asp41, and Cys80. Cys80 acts as the Nucleophile in catalysis. Cys80 bears the 3-oxoalanine (Cys) mark. The active site involves His143. Residue Asn205 is glycosylated (N-linked (GlcNAc...) asparagine). Positions 290 and 291 each coordinate Ca(2+). A disulfide bridge links Cys310 with Cys421. N-linked (GlcNAc...) asparagine glycosylation occurs at Asn425. 2 disulfide bridges follow: Cys491-Cys520 and Cys503-Cys509.

It belongs to the sulfatase family. In terms of assembly, homodimer. The cofactor is Ca(2+). The conversion to 3-oxoalanine (also known as C-formylglycine, FGly), of a serine or cysteine residue in prokaryotes and of a cysteine residue in eukaryotes, is critical for catalytic activity.

The protein resides in the lysosome. It catalyses the reaction Hydrolysis of the 6-sulfate groups of the N-acetyl-D-galactosamine 6-sulfate units of chondroitin sulfate and of the D-galactose 6-sulfate units of keratan sulfate.. The sequence is that of N-acetylgalactosamine-6-sulfatase (Galns) from Rattus norvegicus (Rat).